Consider the following 151-residue polypeptide: Large-conductance mechanosensitive channel (151 aa).

3 helical membrane passes run 14 to 34 (VVDM…VNTL), 38 to 58 (VLMP…LYLI), and 86 to 106 (GLFL…FLLV).

This sequence belongs to the MscL family. Homopentamer.

Its subcellular location is the cell inner membrane. Its function is as follows. Channel that opens in response to stretch forces in the membrane lipid bilayer. May participate in the regulation of osmotic pressure changes within the cell. The protein is Large-conductance mechanosensitive channel of Pelodictyon phaeoclathratiforme (strain DSM 5477 / BU-1).